The following is a 606-amino-acid chain: V-type proton ATPase catalytic subunit A (606 aa).

239–246 (GAFGCGKT) contacts ATP.

Belongs to the ATPase alpha/beta chains family. As to quaternary structure, V-ATPase is a heteromultimeric enzyme made up of two complexes: the ATP-hydrolytic V1 complex and the proton translocation V0 complex. The V1 complex consists of three catalytic AB heterodimers that form a heterohexamer, three peripheral stalks each consisting of EG heterodimers, one central rotor including subunits D and F, and the regulatory subunits C and H. The proton translocation complex V0 consists of the proton transport subunit a, a ring of proteolipid subunits c9c'', rotary subunit d, subunits e and f, and the accessory subunits vah-19/Ac45 and vah-20/PRR.

The catalysed reaction is ATP + H2O + 4 H(+)(in) = ADP + phosphate + 5 H(+)(out). Its function is as follows. Catalytic subunit of the V1 complex of vacuolar(H+)-ATPase (V-ATPase), a multisubunit enzyme composed of a peripheral complex (V1) that hydrolyzes ATP and a membrane integral complex (V0) that translocates protons. V-ATPase is responsible for acidifying and maintaining the pH of intracellular compartments and in some cell types, is targeted to the plasma membrane, where it is responsible for acidifying the extracellular environment. Required along with other vacuolar ATPase components for the removal of protein aggregates which form in immature oocytes in the distal gonad. This removal occurs as the oocytes mature and move to the proximal gonad, is triggered by the introduction of sperm through mating and occurs before fertilization. The introduction of sperm triggers V-ATPase accumulation in proximal oocytes and induces lysosomal acidification which leads to engulfing of protein aggregates by lysosomes and subsequent clearance of the aggregates. Lysosomal acidification also leads to changes in mitochondrial morphology and function. Mitochondria in distal immature oocytes are fragmented, produce high levels of reactive oxygen species (ROS) and have high membrane potential, indicative of metabolic inactivity. In contrast, mitochondria in proximal mature oocytes are tubular with lower ROS levels and membrane potential, indicative of an active metabolic state required for aggregate mobilization before clearance. Involved in receptor-mediated endocytosis. The protein is V-type proton ATPase catalytic subunit A of Caenorhabditis briggsae.